The following is a 64-amino-acid chain: Large ribosomal subunit protein bL33 (64 aa).

Belongs to the bacterial ribosomal protein bL33 family.

The protein is Large ribosomal subunit protein bL33 of Prochlorococcus marinus (strain MIT 9313).